Here is a 328-residue protein sequence, read N- to C-terminus: Glyoxylate reductase/hydroxypyruvate reductase (328 aa).

S36 bears the Phosphoserine mark. 83–84 (VG) provides a ligand contact to substrate. NADP(+) contacts are provided by residues 162 to 164 (GRI), 185 to 188 (RQPR), S217, and I243. Residues R245, D269, and 293–296 (HIGS) contribute to the substrate site. H293 serves as the catalytic Proton donor. G295 provides a ligand contact to NADP(+). Residue T298 is modified to Phosphothreonine.

It belongs to the D-isomer specific 2-hydroxyacid dehydrogenase family. As to quaternary structure, homodimer.

It carries out the reaction glycolate + NADP(+) = glyoxylate + NADPH + H(+). It catalyses the reaction (R)-glycerate + NAD(+) = 3-hydroxypyruvate + NADH + H(+). The catalysed reaction is (R)-glycerate + NADP(+) = 3-hydroxypyruvate + NADPH + H(+). Its function is as follows. Enzyme with hydroxy-pyruvate reductase, glyoxylate reductase and D-glycerate dehydrogenase enzymatic activities. Reduces hydroxypyruvate to D-glycerate, glyoxylate to glycolate oxidizes D-glycerate to hydroxypyruvate. The protein is Glyoxylate reductase/hydroxypyruvate reductase (Grhpr) of Mus musculus (Mouse).